We begin with the raw amino-acid sequence, 377 residues long: 4-hydroxy-tetrahydrodipicolinate synthase 2, chloroplastic (377 aa).

The transit peptide at 1–51 (MMAAQPTANPGVRLGWKAPGALASPPRLALSRSAAAPLASHRVGRGKFSAA) directs the protein to the chloroplast. A pyruvate-binding site is contributed by T120. The Proton donor/acceptor role is filled by Y206. Catalysis depends on K234, which acts as the Schiff-base intermediate with substrate. I273 contacts pyruvate.

Belongs to the DapA family. Tetramer of modified subunits derived from two genes in different combinations.

It localises to the plastid. Its subcellular location is the chloroplast. It carries out the reaction L-aspartate 4-semialdehyde + pyruvate = (2S,4S)-4-hydroxy-2,3,4,5-tetrahydrodipicolinate + H2O + H(+). Its pathway is amino-acid biosynthesis; L-lysine biosynthesis via DAP pathway; (S)-tetrahydrodipicolinate from L-aspartate: step 3/4. Its activity is regulated as follows. Sensitive to lysine inhibition. This inhibition increase in an allosteric manner with increasing concentration of the inhibitor. Functionally, catalyzes the condensation of (S)-aspartate-beta-semialdehyde [(S)-ASA] and pyruvate to 4-hydroxy-tetrahydrodipicolinate (HTPA). The sequence is that of 4-hydroxy-tetrahydrodipicolinate synthase 2, chloroplastic from Triticum aestivum (Wheat).